A 122-amino-acid chain; its full sequence is Large ribosomal subunit protein bL19 (122 aa).

Belongs to the bacterial ribosomal protein bL19 family.

Functionally, this protein is located at the 30S-50S ribosomal subunit interface and may play a role in the structure and function of the aminoacyl-tRNA binding site. This is Large ribosomal subunit protein bL19 (rplS) from Synechocystis sp. (strain ATCC 27184 / PCC 6803 / Kazusa).